The chain runs to 263 residues: Norsolorinic acid ketoreductase stcE (263 aa).

Positions 29, 76, 105, 177, 181, 208, and 210 each coordinate NADP(+). Tyr-177 serves as the catalytic Proton donor. Lys-181 functions as the Lowers pKa of active site Tyr in the catalytic mechanism.

Belongs to the short-chain dehydrogenases/reductases (SDR) family.

It catalyses the reaction (1'S)-averantin + NADP(+) = norsolorinic acid + NADPH + H(+). The protein operates within mycotoxin biosynthesis; sterigmatocystin biosynthesis. Short chain dehydrogenase; part of the gene cluster that mediates the biosynthesis of sterigmatocystin (ST), a polyketide-derived furanocoumarin which is part of the most toxic and carcinogenic compounds among the known mycotoxins. The first step in the biosynthesis of sterigmatocystin is the production of hexanoate by the fatty acid synthase (FAS) units stcJ and stcK. The polyketide backbone is assembled by the non-reducing polyketide synthase stcA by condensation of the starter hexanoyl-CoA and 7 malonyl-CoA extender units followed by cyclization and release of norsolorinic acid. Norsolorinic acid is the first stable intermediate in the biosynthesis of sterigmatocystin and is converted into averantin (AVN) by the ketoreductase stcE which reduces the hexanoate ketone to an alcohol. Averantin is then oxidized into 5'-hydroxyaverantin (HAVN) by the cytochrome P450 monooxygenase stcF. 5'-hydroxyaverantin is further converted to 5'-oxyaverantin (OAVN) by the 5'-hydroxyaverantin dehydrogenase stcG. The next step is the conversion of OAVN into averufin (AVF) which is catalyzed by a yet to be identified enzyme. The cytochrome P450 monooxygenase stcB and the flavin-binding monooxygenase stcW are both required for the conversion of averufin to 1-hydroxyversicolorone. The esterase stcI probably catalyzes the formation of versiconal hemiacetal acetate from 1-hydroxyversicolorone. The oxydoreductase stcN then probably catalyzes the biosynthetic step from versiconal to versicolorin B (VERB). The next step is performed by the versicolorin B desaturase stcL to produce versicolorin A (VERA). The ketoreductase stcU and the cytochrome P450 monooxygenase stcS are involved in the conversion of versicolorin A to demethylsterigmatocystin. The Baeyer-Villiger oxidas stcQ and the reductase stcR might be involved in the biosynthetic step from versicolorin A to demethylsterigmatocystin. The final step in the biosynthesis of sterigmatocystin is the methylation of demethylsterigmatocystin catalyzed by the methyltransferase stcP. In Emericella nidulans (strain FGSC A4 / ATCC 38163 / CBS 112.46 / NRRL 194 / M139) (Aspergillus nidulans), this protein is Norsolorinic acid ketoreductase stcE.